The primary structure comprises 677 residues: DNA ligase (677 aa).

NAD(+) is bound by residues 32–36, 81–82, and E112; these read DSEYD and SL. The N6-AMP-lysine intermediate role is filled by K114. 4 residues coordinate NAD(+): R135, E171, K288, and K312. The Zn(2+) site is built by C416, C419, C434, and C439. A BRCT domain is found at 598 to 677; that stretch reads YKPLPLSGVE…QEFINMLEQS (80 aa).

It belongs to the NAD-dependent DNA ligase family. LigA subfamily. Mg(2+) serves as cofactor. The cofactor is Mn(2+).

It catalyses the reaction NAD(+) + (deoxyribonucleotide)n-3'-hydroxyl + 5'-phospho-(deoxyribonucleotide)m = (deoxyribonucleotide)n+m + AMP + beta-nicotinamide D-nucleotide.. Functionally, DNA ligase that catalyzes the formation of phosphodiester linkages between 5'-phosphoryl and 3'-hydroxyl groups in double-stranded DNA using NAD as a coenzyme and as the energy source for the reaction. It is essential for DNA replication and repair of damaged DNA. This Dehalococcoides mccartyi (strain ATCC BAA-2266 / KCTC 15142 / 195) (Dehalococcoides ethenogenes (strain 195)) protein is DNA ligase.